Consider the following 235-residue polypeptide: Orotidine 5'-phosphate decarboxylase (235 aa).

Residues Asp-17, Lys-39, 66 to 75, Thr-121, Arg-182, Gln-191, Gly-211, and Arg-212 contribute to the substrate site; that span reads DLKLHDIGNT. The Proton donor role is filled by Lys-68.

It belongs to the OMP decarboxylase family. Type 1 subfamily. Homodimer.

The enzyme catalyses orotidine 5'-phosphate + H(+) = UMP + CO2. Its pathway is pyrimidine metabolism; UMP biosynthesis via de novo pathway; UMP from orotate: step 2/2. In terms of biological role, catalyzes the decarboxylation of orotidine 5'-monophosphate (OMP) to uridine 5'-monophosphate (UMP). This Afipia carboxidovorans (strain ATCC 49405 / DSM 1227 / KCTC 32145 / OM5) (Oligotropha carboxidovorans) protein is Orotidine 5'-phosphate decarboxylase.